The primary structure comprises 291 residues: uncharacterized protein (291 aa).

2 disordered regions span residues 29-50 (SEKP…LRDS) and 168-291 (RKVK…AELK). A Phosphoserine modification is found at S50. Polar residues-rich tracts occupy residues 176–186 (NSKNPSKTGTP) and 205–217 (QKNS…SKLI). Positions 221-237 (YKDEWLQQQKAEADRRT) are enriched in basic and acidic residues. A compositionally biased stretch (polar residues) spans 280–291 (SSPSESTPAELK).

This is an uncharacterized protein from Mus musculus (Mouse).